The primary structure comprises 89 residues: Small ribosomal subunit protein bS16 (89 aa).

The protein belongs to the bacterial ribosomal protein bS16 family.

This Desulforamulus reducens (strain ATCC BAA-1160 / DSM 100696 / MI-1) (Desulfotomaculum reducens) protein is Small ribosomal subunit protein bS16.